Reading from the N-terminus, the 115-residue chain is Ribonuclease P protein component (115 aa).

The protein belongs to the RnpA family. In terms of assembly, consists of a catalytic RNA component (M1 or rnpB) and a protein subunit.

The enzyme catalyses Endonucleolytic cleavage of RNA, removing 5'-extranucleotides from tRNA precursor.. Functionally, RNaseP catalyzes the removal of the 5'-leader sequence from pre-tRNA to produce the mature 5'-terminus. It can also cleave other RNA substrates such as 4.5S RNA. The protein component plays an auxiliary but essential role in vivo by binding to the 5'-leader sequence and broadening the substrate specificity of the ribozyme. The chain is Ribonuclease P protein component from Bacillus mycoides (strain KBAB4) (Bacillus weihenstephanensis).